The primary structure comprises 636 residues: MVQASSHAEGGHEGKQGASRSVGLLVAAVGVVYGDIGTSPLYTLKEVFTGGYGVSVNHDGVLGILSLILWSLLWVVSFKYVMFILRADNQGEGGTMALTALARRATAAYPRLRTLMVICGLIGASLFYGDSMITPAVSVLSAVEGMGLAFDGIDHWVVPISLVVLVALFLVQQHGTEKIGKLFGPIMVTWFVALGALGVHGISQSPEVLKAFNPGWAVNFFVVHPGIGVAILGAVVLALTGAEALYADMGHFGRKPIARAWFILVLPALVLNYFGQGALLLQNPEAARNPFYLLAPGWALLPLVGLATMATVIASQAVISGAFSLTRQAIQLGYIPRMQIQHTSSDEQGQIYIGAVNWTLMVGVVLLVIGFGSSGALAAAYGVAVTGTMLMTTILVSAVMLLLWKWPPLLAVPILVGFLFVDGLFFAANVPKIVQGGAFPVLAGGVLYLLMSTWKRGKQILVERIDEGALPLPLFISSIRIQPPHRVEGTAVFLTARSDAVPHALLHNMLHNQVLHSQVVLLTVVSEDRPRVPEHERFEVEAYGDGFFRVLLHFGFMDEPDVPAALKLCHLDDLDFTPMRTTYFLSRETVIASRLEGMSRWRGNLFAFLLKNANGNLRFFNLPLNRVIELGTQVEI.

12 consecutive transmembrane segments (helical) span residues 22–42 (VGLL…SPLY), 64–84 (ILSL…VMFI), 115–135 (LMVI…MITP), 150–170 (FDGI…ALFL), 182–202 (LFGP…VHGI), 220–240 (FFVV…LALT), 261–281 (WFIL…ALLL), 293–313 (LLAP…ATVI), 351–371 (IYIG…VIGF), 383–403 (VAVT…MLLL), 408–428 (PLLA…FFAA), and 433–453 (IVQG…LMST).

Belongs to the HAK/KUP transporter (TC 2.A.72) family.

The protein localises to the cell inner membrane. The catalysed reaction is K(+)(in) + H(+)(in) = K(+)(out) + H(+)(out). Its function is as follows. Transport of potassium into the cell. Likely operates as a K(+):H(+) symporter. This Pseudomonas putida (strain ATCC 700007 / DSM 6899 / JCM 31910 / BCRC 17059 / LMG 24140 / F1) protein is Probable potassium transport system protein Kup.